The chain runs to 25 residues: Dermaseptin-DI5 (25 aa).

The protein belongs to the frog skin active peptide (FSAP) family. Dermaseptin subfamily. In terms of tissue distribution, expressed by the skin glands.

It is found in the secreted. Its function is as follows. Antibacterial peptide with activity against Gram-positive bacteria S.aureus and E.faecalis, and Gram-negative bacteria P.aeruginosa and E.coli. This Phyllomedusa distincta (Monkey frog) protein is Dermaseptin-DI5.